Here is a 577-residue protein sequence, read N- to C-terminus: Moesin (577 aa).

The region spanning 2 to 295 is the FERM domain; sequence PKTINVRVTT…GNHELYMRRR (294 aa). Residue Ser-74 is modified to Phosphoserine. At Lys-79 the chain carries N6-acetyllysine. Lys-83 is modified (N6-succinyllysine). Positions 115–120 match the [IL]-x-C-x-x-[DE] motif motif; that stretch reads IYCPPE. Position 116 is a phosphotyrosine (Tyr-116). Cys-117 is subject to S-nitrosocysteine. N6-acetyllysine occurs at positions 139 and 165. Residues 375–401 are compositionally biased toward basic and acidic residues; that stretch reads LEQERKRAQSEAEKLAKERQEAEEAKE. 2 disordered regions span residues 375–409 and 466–518; these read LEQE…ASQD and AMST…NERV. At Ser-407 the chain carries Phosphoserine. A compositionally biased stretch (acidic residues) spans 476 to 487; the sequence is AENEQDEQDENG. The span at 492-518 shows a compositional bias: basic and acidic residues; the sequence is AELRADAMAKDRSEEERTTEAEKNERV. Ser-527 bears the Phosphoserine mark. Thr-558 bears the Phosphothreonine; by ROCK2 and STK10 mark.

As to quaternary structure, in resting T-cells, part of a PAG1-NHERF1-MSN complex which is disrupted upon TCR activation. Interacts with NHERF1. Interacts with PPP1R16B. Interacts with PDZD8. Interacts with SELPLG and SYK; these interactions mediate the activation of SYK by SELPLG. Interacts with PDPN (via cytoplasmic domain); this interaction activates RHOA and promotes epithelial-mesenchymal transition. Interacts with SPN/CD43 cytoplasmic tail. Interacts with CD44. Interacts with ICAM2. Interacts with ICAM3 (via C-terminus). Interacts with PDZD8. Interacts with F-actin. Interacts with CD46. Interacts with PTPN6. Post-translationally, phosphorylation on Thr-558 is crucial for the formation of microvilli-like structures. Phosphorylation by ROCK2 suppresses the head-to-tail association of the N-terminal and C-terminal halves resulting in an opened conformation which is capable of actin and membrane-binding. Phosphorylation on Thr-558 by STK10 negatively regulates lymphocyte migration and polarization. In terms of processing, S-nitrosylation of Cys-117 is induced by interferon-gamma and oxidatively-modified low-densitity lipoprotein (LDL(ox)) implicating the iNOS-S100A8/9 transnitrosylase complex.

The protein localises to the cell membrane. It is found in the cytoplasm. It localises to the cytoskeleton. Its subcellular location is the apical cell membrane. The protein resides in the cell projection. The protein localises to the microvillus membrane. It is found in the microvillus. Its activity is regulated as follows. A head-to-tail association, of the N-terminal and C-terminal halves results in a closed conformation (inactive form) which is incapable of actin or membrane-binding. Its function is as follows. Ezrin-radixin-moesin (ERM) family protein that connects the actin cytoskeleton to the plasma membrane and thereby regulates the structure and function of specific domains of the cell cortex. Tethers actin filaments by oscillating between a resting and an activated state providing transient interactions between moesin and the actin cytoskeleton. Once phosphorylated on its C-terminal threonine, moesin is activated leading to interaction with F-actin and cytoskeletal rearrangement. These rearrangements regulate many cellular processes, including cell shape determination, membrane transport, and signal transduction. The role of moesin is particularly important in immunity acting on both T and B-cells homeostasis and self-tolerance, regulating lymphocyte egress from lymphoid organs. Modulates phagolysosomal biogenesis in macrophages. Participates also in immunologic synapse formation. The sequence is that of Moesin from Bos taurus (Bovine).